A 419-amino-acid chain; its full sequence is Divinyl chlorophyllide a 8-vinyl-reductase, chloroplastic (419 aa).

The transit peptide at 1–71 (MSICSTVGAG…PIVVSSTPVV (71 aa)) directs the protein to the chloroplast.

Its subcellular location is the plastid. The protein resides in the chloroplast. The enzyme catalyses protochlorophyllide a + NADP(+) = 3,8-divinyl protochlorophyllide a + NADPH + H(+). The protein operates within porphyrin-containing compound metabolism; chlorophyll biosynthesis. Catalyzes the conversion of divinyl chlorophyllide to monovinyl chlorophyllide. Reduces the 8-vinyl group of the tetrapyrrole to an ethyl group using NADPH as the reductant. The best substrate is (3,8-divinyl)-chlorophyllide a (DV-Chlidea). Very low activity with (3,8-divinyl)-protochlorophyllide a (DV-Pchlidea) and (3,8-divinyl)-magnesium-protoporphyrin IX monomethyl ester (DV-MPE). No activity with (3,8-divinyl)-magnesium-protoporphyrin IX (DV-Mg-Proto) and (3,8-divinyl)-chlorophyll a (DV-Chla). This chain is Divinyl chlorophyllide a 8-vinyl-reductase, chloroplastic (DVR), found in Cucumis sativus (Cucumber).